The primary structure comprises 252 residues: Cell division protein ZapD (252 aa).

It belongs to the ZapD family. In terms of assembly, interacts with FtsZ.

The protein resides in the cytoplasm. Its function is as follows. Cell division factor that enhances FtsZ-ring assembly. Directly interacts with FtsZ and promotes bundling of FtsZ protofilaments, with a reduction in FtsZ GTPase activity. The protein is Cell division protein ZapD of Cupriavidus metallidurans (strain ATCC 43123 / DSM 2839 / NBRC 102507 / CH34) (Ralstonia metallidurans).